A 210-amino-acid chain; its full sequence is Urease accessory protein UreF (210 aa).

It belongs to the UreF family. UreD, UreF and UreG form a complex that acts as a GTP-hydrolysis-dependent molecular chaperone, activating the urease apoprotein by helping to assemble the nickel containing metallocenter of UreC. The UreE protein probably delivers the nickel.

The protein resides in the cytoplasm. Required for maturation of urease via the functional incorporation of the urease nickel metallocenter. The sequence is that of Urease accessory protein UreF from Cereibacter sphaeroides (strain ATCC 17023 / DSM 158 / JCM 6121 / CCUG 31486 / LMG 2827 / NBRC 12203 / NCIMB 8253 / ATH 2.4.1.) (Rhodobacter sphaeroides).